The following is a 431-amino-acid chain: Homogentisate 1,2-dioxygenase (431 aa).

Histidine 286 acts as the Proton acceptor in catalysis. Residues histidine 329 and glutamate 335 each coordinate Fe cation. Residues tyrosine 344 and histidine 365 each contribute to the homogentisate site. Residue histidine 365 participates in Fe cation binding.

Belongs to the homogentisate dioxygenase family. Hexamer; dimer of trimers. Fe cation serves as cofactor.

The catalysed reaction is homogentisate + O2 = 4-maleylacetoacetate + H(+). It participates in amino-acid degradation; L-phenylalanine degradation; acetoacetate and fumarate from L-phenylalanine: step 4/6. Its function is as follows. Involved in the catabolism of homogentisate (2,5-dihydroxyphenylacetate or 2,5-OH-PhAc), a central intermediate in the degradation of phenylalanine and tyrosine. Catalyzes the oxidative ring cleavage of the aromatic ring of homogentisate to yield maleylacetoacetate. The sequence is that of Homogentisate 1,2-dioxygenase from Pseudomonas fluorescens (strain Pf0-1).